We begin with the raw amino-acid sequence, 372 residues long: Chaperone protein DnaJ (372 aa).

A J domain is found at 5-69 (DYYEVLGVSK…DKRKQYDQFG (65 aa)). The CR-type zinc-finger motif lies at 139–221 (GVDKIIELDL…CKGKGKYLER (83 aa)). 8 residues coordinate Zn(2+): Cys-152, Cys-155, Cys-169, Cys-172, Cys-195, Cys-198, Cys-209, and Cys-212. 4 CXXCXGXG motif repeats span residues 152–159 (CSVCFGSG), 169–176 (CNNCHGTG), 195–202 (CNVCNGAG), and 209–216 (CKNCKGKG).

This sequence belongs to the DnaJ family. Homodimer. Requires Zn(2+) as cofactor.

Its subcellular location is the cytoplasm. Functionally, participates actively in the response to hyperosmotic and heat shock by preventing the aggregation of stress-denatured proteins and by disaggregating proteins, also in an autonomous, DnaK-independent fashion. Unfolded proteins bind initially to DnaJ; upon interaction with the DnaJ-bound protein, DnaK hydrolyzes its bound ATP, resulting in the formation of a stable complex. GrpE releases ADP from DnaK; ATP binding to DnaK triggers the release of the substrate protein, thus completing the reaction cycle. Several rounds of ATP-dependent interactions between DnaJ, DnaK and GrpE are required for fully efficient folding. Also involved, together with DnaK and GrpE, in the DNA replication of plasmids through activation of initiation proteins. In Mycoplasma mycoides subsp. mycoides SC (strain CCUG 32753 / NCTC 10114 / PG1), this protein is Chaperone protein DnaJ.